We begin with the raw amino-acid sequence, 238 residues long: Pyridoxine 5'-phosphate synthase (238 aa).

A 3-amino-2-oxopropyl phosphate-binding site is contributed by asparagine 9. 11–12 serves as a coordination point for 1-deoxy-D-xylulose 5-phosphate; it reads DH. 3-amino-2-oxopropyl phosphate is bound at residue arginine 20. Catalysis depends on histidine 45, which acts as the Proton acceptor. The 1-deoxy-D-xylulose 5-phosphate site is built by arginine 47 and histidine 52. The active-site Proton acceptor is glutamate 72. 1-deoxy-D-xylulose 5-phosphate is bound at residue threonine 102. The Proton donor role is filled by histidine 189. Residues glycine 190 and 211–212 contribute to the 3-amino-2-oxopropyl phosphate site; that span reads GH.

It belongs to the PNP synthase family. As to quaternary structure, homooctamer; tetramer of dimers.

Its subcellular location is the cytoplasm. It catalyses the reaction 3-amino-2-oxopropyl phosphate + 1-deoxy-D-xylulose 5-phosphate = pyridoxine 5'-phosphate + phosphate + 2 H2O + H(+). The protein operates within cofactor biosynthesis; pyridoxine 5'-phosphate biosynthesis; pyridoxine 5'-phosphate from D-erythrose 4-phosphate: step 5/5. In terms of biological role, catalyzes the complicated ring closure reaction between the two acyclic compounds 1-deoxy-D-xylulose-5-phosphate (DXP) and 3-amino-2-oxopropyl phosphate (1-amino-acetone-3-phosphate or AAP) to form pyridoxine 5'-phosphate (PNP) and inorganic phosphate. The chain is Pyridoxine 5'-phosphate synthase from Ehrlichia ruminantium (strain Gardel).